The chain runs to 217 residues: Probable coenzyme A transferase subunit beta (217 aa).

Residue E50 is part of the active site.

It belongs to the 3-oxoacid CoA-transferase subunit B family. In terms of assembly, heterodimer of a subunit alpha and a subunit beta.

The polypeptide is Probable coenzyme A transferase subunit beta (yodR) (Bacillus subtilis (strain 168)).